A 336-amino-acid chain; its full sequence is Isethionate-binding periplasmic protein DctP (336 aa).

The signal sequence occupies residues 1–23 (MKHLLKAGALVALACIVTLTAGA).

It belongs to the bacterial solute-binding protein 7 family. The complex comprises the periplasmic solute receptor protein DctP, and the fused transmembrane protein DctMQ.

It localises to the periplasm. The catalysed reaction is 2-hydroxyethane-1-sulfonate(out) + Na(+)(out) = 2-hydroxyethane-1-sulfonate(in) + Na(+)(in). The protein operates within organosulfur degradation; alkanesulfonate degradation. Part of the tripartite ATP-independent periplasmic (TRAP) transport system DctPQM involved in the uptake of isethionate (2-hydroxyethanesulfonate), which is then catabolized by enzymes encoded by adjacent genes in the locus. The DctP subunit is the solute-binding protein. Thereby is involved in an anaerobic respiration pathway that converts the sulfonate isethionate to ammonia, acetate and sulfide. The chain is Isethionate-binding periplasmic protein DctP from Oleidesulfovibrio alaskensis (strain ATCC BAA-1058 / DSM 17464 / G20) (Desulfovibrio alaskensis).